A 300-amino-acid chain; its full sequence is Spermine synthase SPE4 (300 aa).

S5 bears the Phosphoserine mark. In terms of domain architecture, PABS spans 12–255 (DGWFREINDK…GQLGLIVCSN (244 aa)). S-adenosyl 3-(methylsulfanyl)propylamine is bound by residues Q44, D99, E119, and 151–152 (DG). D174 serves as the catalytic Proton acceptor. Position 177 (D177) interacts with spermidine.

This sequence belongs to the spermidine/spermine synthase family.

The enzyme catalyses S-adenosyl 3-(methylsulfanyl)propylamine + spermidine = spermine + S-methyl-5'-thioadenosine + H(+). It participates in amine and polyamine biosynthesis; spermine biosynthesis; spermine from spermidine: step 1/1. In Saccharomyces cerevisiae (strain ATCC 204508 / S288c) (Baker's yeast), this protein is Spermine synthase SPE4 (SPE4).